The primary structure comprises 303 residues: MVQDRLFQKAISVLLIAGYEVSERCAIRPRSFDLIAEKGGLLLIIKVSSPIDNVSEEIARDLDLIAGHLEGSPLIIGGRARDTDLERGAVYLRYGIIAINPETLYDYLVDGIPPLVYASPGGLYVNINGDVLRGLREQRNMSLGDLGAVLGVSRRTISKYESGMGTTLEIAIKIEEVFDSGVIESIDLLKYTSHFANKPQERLPVQALAVLERIGLELHALRRAPFQALATFEGEMILTGYGTAQKVVKRAGLIGNLSAITHTHAMCVAIDGSIRKKVGQTLIIGEEELHDIEDGEELIELFD.

Positions 132–189 constitute an HTH cro/C1-type domain; that stretch reads LRGLREQRNMSLGDLGAVLGVSRRTISKYESGMGTTLEIAIKIEEVFDSGVIESIDLL. A DNA-binding region (H-T-H motif) is located at residues 143–162; the sequence is LGDLGAVLGVSRRTISKYES.

This is Putative HTH-type transcriptional regulatory protein Mpal_0031 from Methanosphaerula palustris (strain ATCC BAA-1556 / DSM 19958 / E1-9c).